A 210-amino-acid chain; its full sequence is CLAVATA3/ESR (CLE)-related protein 4D (210 aa).

A signal peptide spans 1 to 21 (MAKNAMLCLLILSVVLALAFA). The interval 21–83 (ATNKKDDEEP…SNQLPNNNWM (63 aa)) is required for secretion from the host cytoplasm to the host apoplasm. 2 N-linked (GlcNAc...) asparagine glycosylation sites follow: N32 and N59. The tract at residues 115–210 (RRKTGTHSQR…APAGPDPIHH (96 aa)) is disordered. Basic and acidic residues-rich tracts occupy residues 125-137 (HHEE…EKRG), 144-158 (PIHH…EKRG), 165-179 (PIHH…EKRV), and 186-200 (PIHH…EKRG). The stretch at 127 to 135 (EETTLEQEK) is one A-1 repeat. Residues 129–198 (TTLEQEKRGA…HQDTKFEQEK (70 aa)) form a 4 X approximate repeat A region. The stretch at 136–147 (RGAPAGPDPIHH) is one CLE-1 repeat. The tract at residues 136 to 210 (RGAPAGPDPI…APAGPDPIHH (75 aa)) is 4 X approximate repeat CLE. The stretch at 148-156 (QDTTFEQEK) is one A-2 repeat. The stretch at 157 to 168 (RGAPAGPDPIHH) is one CLE-2 repeat. One copy of the A-3 repeat lies at 169 to 177 (QDTTLEQEK). A CLE-3 repeat occupies 178–189 (RVAGAGPDPIHH). An A-4 repeat occupies 190–198 (QDTKFEQEK). Residues 199–210 (RGAPAGPDPIHH) form a CLE-4 repeat.

It belongs to the CLV3/ESR signal peptide family. In terms of tissue distribution, highly expressed exclusively within the dorsal esophageal gland cell during syncytium formation in host plants.

It localises to the secreted. It is found in the host cytoplasm. The protein localises to the host extracellular space. Its subcellular location is the extracellular space. The protein resides in the apoplast. Its function is as follows. Mimics host plant CLE extracellular signal peptides that regulate cell fate. May play a role in the differentiation or division of feeding cells (syncytia) induced in plant roots during infection. This Globodera rostochiensis (Golden nematode worm) protein is CLAVATA3/ESR (CLE)-related protein 4D (CLE-4D).